Reading from the N-terminus, the 258-residue chain is Regulatory protein RecX (258 aa).

The protein belongs to the RecX family.

It localises to the cytoplasm. Its function is as follows. Modulates RecA activity. This Streptococcus pyogenes serotype M12 (strain MGAS2096) protein is Regulatory protein RecX.